The chain runs to 302 residues: Sulfate adenylyltransferase subunit 2 (302 aa).

Positions 280–302 are disordered; it reads RQGRAIDHDQSGSMELKKRQGYF.

This sequence belongs to the PAPS reductase family. CysD subfamily. In terms of assembly, heterodimer composed of CysD, the smaller subunit, and CysN.

It carries out the reaction sulfate + ATP + H(+) = adenosine 5'-phosphosulfate + diphosphate. It functions in the pathway sulfur metabolism; hydrogen sulfide biosynthesis; sulfite from sulfate: step 1/3. Its function is as follows. With CysN forms the ATP sulfurylase (ATPS) that catalyzes the adenylation of sulfate producing adenosine 5'-phosphosulfate (APS) and diphosphate, the first enzymatic step in sulfur assimilation pathway. APS synthesis involves the formation of a high-energy phosphoric-sulfuric acid anhydride bond driven by GTP hydrolysis by CysN coupled to ATP hydrolysis by CysD. The chain is Sulfate adenylyltransferase subunit 2 from Vibrio cholerae serotype O1 (strain ATCC 39541 / Classical Ogawa 395 / O395).